The chain runs to 372 residues: Mitogen-activated protein kinase kinase kinase 17 (372 aa).

A Protein kinase domain is found at 3-259 (WTRGRILGRG…ATQLLNHPFL (257 aa)). ATP-binding positions include 9-17 (LGRGSTATV) and Lys-32. Asp-126 (proton acceptor) is an active-site residue. Ser-312 bears the Phosphoserine mark.

Belongs to the protein kinase superfamily. Ser/Thr protein kinase family. As to quaternary structure, binds to MKK3.

The protein resides in the nucleus. The enzyme catalyses L-seryl-[protein] + ATP = O-phospho-L-seryl-[protein] + ADP + H(+). It catalyses the reaction L-threonyl-[protein] + ATP = O-phospho-L-threonyl-[protein] + ADP + H(+). Functionally, component of the abscisic acid (ABA) signaling pathway that may act as ABA signal transducer in the context of abiotic stresses. Triggers MPK7 activation in a MKK3-dependent manner. Mediates the ABA-dependent activation of the MKK3-MPK7 module. In Arabidopsis thaliana (Mouse-ear cress), this protein is Mitogen-activated protein kinase kinase kinase 17.